A 545-amino-acid polypeptide reads, in one-letter code: Membrane protein insertase YidC (545 aa).

A helical membrane pass occupies residues 6–26 (NILLIGLLFVSFLLWQQWQAD). The interval 44–65 (STVADAHSSDVPDADSAVPEAT) is disordered. The next 4 membrane-spanning stretches (helical) occupy residues 346 to 366 (LLMFFQSIVGNWGIAIILITL), 424 to 444 (GGCLPILLQMPIFIALYWVLL), 461 to 481 (LSVQDPYYVMPILMGISMFVM), and 504 to 524 (VIFTVFFLWFPAGLVLYWLVG).

Belongs to the OXA1/ALB3/YidC family. Type 1 subfamily. As to quaternary structure, interacts with the Sec translocase complex via SecD. Specifically interacts with transmembrane segments of nascent integral membrane proteins during membrane integration.

It is found in the cell inner membrane. In terms of biological role, required for the insertion and/or proper folding and/or complex formation of integral membrane proteins into the membrane. Involved in integration of membrane proteins that insert both dependently and independently of the Sec translocase complex, as well as at least some lipoproteins. Aids folding of multispanning membrane proteins. In Shewanella pealeana (strain ATCC 700345 / ANG-SQ1), this protein is Membrane protein insertase YidC.